Consider the following 230-residue polypeptide: MAKTSKRYREIVQKIDRSQLYSLVDALALVKETAVAKFDESVDIAINLGIDVRKSDQVVRGSVVLPSGTGKSVRVAVFAQGDKAKEALDAGADIVGFEDLAERVKAGEINFDLAIASPDAMRVVGQLGQILGPRGLMPNPKVGTVTVDVINAIRNAKAGQVQFRADKAGIVHCTVGRASFDVEALRANIMALVDALNKSKPTTSKGVYLRKMAISSTMGVGVRVDHTAIV.

This sequence belongs to the universal ribosomal protein uL1 family. As to quaternary structure, part of the 50S ribosomal subunit.

Binds directly to 23S rRNA. The L1 stalk is quite mobile in the ribosome, and is involved in E site tRNA release. Its function is as follows. Protein L1 is also a translational repressor protein, it controls the translation of the L11 operon by binding to its mRNA. This Nitrosomonas europaea (strain ATCC 19718 / CIP 103999 / KCTC 2705 / NBRC 14298) protein is Large ribosomal subunit protein uL1.